The primary structure comprises 465 residues: Siroheme synthase (465 aa).

The tract at residues methionine 1–leucine 203 is precorrin-2 dehydrogenase /sirohydrochlorin ferrochelatase. NAD(+)-binding positions include glutamate 22 to valine 23 and proline 43 to glutamine 44. At serine 128 the chain carries Phosphoserine. The segment at glycine 217–alanine 465 is uroporphyrinogen-III C-methyltransferase. Proline 226 is a binding site for S-adenosyl-L-methionine. Aspartate 249 functions as the Proton acceptor in the catalytic mechanism. The Proton donor role is filled by lysine 271. S-adenosyl-L-methionine contacts are provided by residues glycine 302–aspartate 304, isoleucine 307, threonine 332–alanine 333, methionine 384, and glycine 413.

The protein in the N-terminal section; belongs to the precorrin-2 dehydrogenase / sirohydrochlorin ferrochelatase family. In the C-terminal section; belongs to the precorrin methyltransferase family.

The catalysed reaction is uroporphyrinogen III + 2 S-adenosyl-L-methionine = precorrin-2 + 2 S-adenosyl-L-homocysteine + H(+). The enzyme catalyses precorrin-2 + NAD(+) = sirohydrochlorin + NADH + 2 H(+). It carries out the reaction siroheme + 2 H(+) = sirohydrochlorin + Fe(2+). It functions in the pathway cofactor biosynthesis; adenosylcobalamin biosynthesis; precorrin-2 from uroporphyrinogen III: step 1/1. The protein operates within cofactor biosynthesis; adenosylcobalamin biosynthesis; sirohydrochlorin from precorrin-2: step 1/1. It participates in porphyrin-containing compound metabolism; siroheme biosynthesis; precorrin-2 from uroporphyrinogen III: step 1/1. Its pathway is porphyrin-containing compound metabolism; siroheme biosynthesis; siroheme from sirohydrochlorin: step 1/1. It functions in the pathway porphyrin-containing compound metabolism; siroheme biosynthesis; sirohydrochlorin from precorrin-2: step 1/1. Multifunctional enzyme that catalyzes the SAM-dependent methylations of uroporphyrinogen III at position C-2 and C-7 to form precorrin-2 via precorrin-1. Then it catalyzes the NAD-dependent ring dehydrogenation of precorrin-2 to yield sirohydrochlorin. Finally, it catalyzes the ferrochelation of sirohydrochlorin to yield siroheme. The polypeptide is Siroheme synthase (Pseudomonas aeruginosa (strain LESB58)).